The chain runs to 671 residues: DEAD-box ATP-dependent RNA helicase 7 (671 aa).

Residues 1–84 (MPSLMLSDKK…EKKKSSKKVK (84 aa)) form a disordered region. A compositionally biased stretch (basic and acidic residues) spans 26–41 (LDSKKGKKEQKLKLSD). Phosphoserine occurs at positions 40 and 42. Positions 50 to 60 (KKSKKKDKKRK) are enriched in basic residues. Positions 96-124 (NAVSKFRISAPLREKLKANGIEALFPIQA) match the Q motif motif. The 183-residue stretch at 127–309 (FDMVLDGADL…NRFLKRDQKT (183 aa)) folds into the Helicase ATP-binding domain. 140 to 147 (ARTGQGKT) contributes to the ATP binding site. Positions 255 to 258 (DEAD) match the DEAD box motif. The region spanning 339-479 (LIPDIISCYS…HLAAPQPDEI (141 aa)) is the Helicase C-terminal domain. A disordered region spans residues 627-671 (EREPLPQKRFGGGGRGNRFGGGGGNRFGGGGGRGRGGSGGRGQRY). A compositionally biased stretch (gly residues) spans 636 to 671 (FGGGGRGNRFGGGGGNRFGGGGGRGRGGSGGRGQRY).

It belongs to the DEAD box helicase family. DDX21/DDX50 subfamily.

It is found in the nucleus. The enzyme catalyses ATP + H2O = ADP + phosphate + H(+). The sequence is that of DEAD-box ATP-dependent RNA helicase 7 (RH7) from Arabidopsis thaliana (Mouse-ear cress).